Here is a 30-residue protein sequence, read N- to C-terminus: Cyclotide cter-Q (30 aa).

The cyclopeptide (Gly-Asn) cross-link spans 1 to 30 (GIPCGESCVFIPCISTVIGCSCKNKVCYRN). Disulfide bonds link C4/C20, C8/C22, and C13/C27.

This is a cyclic peptide.

Its subcellular location is the secreted. Probably participates in a plant defense mechanism. This is Cyclotide cter-Q from Clitoria ternatea (Butterfly pea).